An 890-amino-acid chain; its full sequence is UPF0182 protein SYNW1212 (890 aa).

Transmembrane regions (helical) follow at residues 21–41 (WLLQ…AIRW), 64–84 (LTLL…NGLI), 98–118 (WQVS…LVAV), 134–154 (AVVL…SIPL), 173–193 (FAAL…CLGN), 219–239 (RLLM…CWLS), 268–288 (LLTV…SLLL), and 295–315 (VLAV…WLIL).

The protein belongs to the UPF0182 family.

It localises to the cell membrane. The sequence is that of UPF0182 protein SYNW1212 from Parasynechococcus marenigrum (strain WH8102).